We begin with the raw amino-acid sequence, 422 residues long: Glutamate-1-semialdehyde 2,1-aminomutase (422 aa).

N6-(pyridoxal phosphate)lysine is present on lysine 258.

This sequence belongs to the class-III pyridoxal-phosphate-dependent aminotransferase family. HemL subfamily. In terms of assembly, homodimer. Pyridoxal 5'-phosphate serves as cofactor.

The protein localises to the cytoplasm. The enzyme catalyses (S)-4-amino-5-oxopentanoate = 5-aminolevulinate. It participates in porphyrin-containing compound metabolism; protoporphyrin-IX biosynthesis; 5-aminolevulinate from L-glutamyl-tRNA(Glu): step 2/2. The polypeptide is Glutamate-1-semialdehyde 2,1-aminomutase (Chlamydia trachomatis serovar D (strain ATCC VR-885 / DSM 19411 / UW-3/Cx)).